A 361-amino-acid chain; its full sequence is Queuine tRNA-ribosyltransferase (361 aa).

D92 serves as the catalytic Proton acceptor. Residues 92–96 (DSGGF), D146, Q189, and G216 each bind substrate. Residues 247 to 253 (GVGKPAD) are RNA binding. The active-site Nucleophile is the D266. The tract at residues 271 to 275 (TRSGR) is RNA binding; important for wobble base 34 recognition. Zn(2+)-binding residues include C304, C306, C309, and H335.

Belongs to the queuine tRNA-ribosyltransferase family. In terms of assembly, homodimer. Within each dimer, one monomer is responsible for RNA recognition and catalysis, while the other monomer binds to the replacement base PreQ1. Zn(2+) is required as a cofactor.

The enzyme catalyses 7-aminomethyl-7-carbaguanine + guanosine(34) in tRNA = 7-aminomethyl-7-carbaguanosine(34) in tRNA + guanine. It functions in the pathway tRNA modification; tRNA-queuosine biosynthesis. Its function is as follows. Catalyzes the base-exchange of a guanine (G) residue with the queuine precursor 7-aminomethyl-7-deazaguanine (PreQ1) at position 34 (anticodon wobble position) in tRNAs with GU(N) anticodons (tRNA-Asp, -Asn, -His and -Tyr). Catalysis occurs through a double-displacement mechanism. The nucleophile active site attacks the C1' of nucleotide 34 to detach the guanine base from the RNA, forming a covalent enzyme-RNA intermediate. The proton acceptor active site deprotonates the incoming PreQ1, allowing a nucleophilic attack on the C1' of the ribose to form the product. After dissociation, two additional enzymatic reactions on the tRNA convert PreQ1 to queuine (Q), resulting in the hypermodified nucleoside queuosine (7-(((4,5-cis-dihydroxy-2-cyclopenten-1-yl)amino)methyl)-7-deazaguanosine). The protein is Queuine tRNA-ribosyltransferase of Rickettsia peacockii (strain Rustic).